The chain runs to 279 residues: Protein K1 (279 aa).

A signal peptide spans 1 to 18 (MFLYVVCSLAVCFRGLLS). At 19–220 (LSLQSSPNLC…TYLYIQEHLL (202 aa)) the chain is on the extracellular side. The chain crosses the membrane as a helical span at residues 221 to 241 (VFMTLVALIGTMCGILGTIIF). At 242 to 279 (AHCQKQRDSNKTVPQQLQDYYSLHDLCTEDYTQPVDWY) the chain is on the cytoplasmic side.

In terms of assembly, homooligomer.

The protein resides in the host membrane. Functionally, promotes host cell survival pathways and may contribute to pathogenesis by preventing infected cells from undergoing apoptosis. Acts in host B-cells by mimicking the activated B-cell receptor complex. The cytoplasmic tail of K1 can induce the phosphorylation of a number of different kinases, leading to the activation of survival signaling pathways. The chain is Protein K1 (K1) from Human herpesvirus 8 type P (isolate GK18) (HHV-8).